A 126-amino-acid polypeptide reads, in one-letter code: Probable 4-amino-4-deoxy-L-arabinose-phosphoundecaprenol flippase subunit ArnF (126 aa).

A helical membrane pass occupies residues 1 to 21; sequence MGFLWALFSVGLVSAAQLLLR. At 22–47 the chain is on the periplasmic side; that stretch reads SAMVALPPLTDIVAFLQHLLHFQPGT. Residues 48–68 form a helical membrane-spanning segment; sequence VGLFFGLLGYLLSMVCWYFAL. Residues 69–76 are Cytoplasmic-facing; the sequence is HRLPLSKA. Residues 77-97 form a helical membrane-spanning segment; that stretch reads YALLSLSYILVWAAAIWLPGW. Over 98–100 the chain is Periplasmic; the sequence is HEP. Residues 101–121 traverse the membrane as a helical segment; it reads FYWQSLLGVTIIVAGVLTIFW. Over 122 to 126 the chain is Cytoplasmic; that stretch reads PVKRR.

Belongs to the ArnF family. As to quaternary structure, heterodimer of ArnE and ArnF.

Its subcellular location is the cell inner membrane. Its pathway is bacterial outer membrane biogenesis; lipopolysaccharide biosynthesis. Translocates 4-amino-4-deoxy-L-arabinose-phosphoundecaprenol (alpha-L-Ara4N-phosphoundecaprenol) from the cytoplasmic to the periplasmic side of the inner membrane. The polypeptide is Probable 4-amino-4-deoxy-L-arabinose-phosphoundecaprenol flippase subunit ArnF (Klebsiella pneumoniae (strain 342)).